We begin with the raw amino-acid sequence, 242 residues long: Uridylate kinase (242 aa).

16–19 is an ATP binding site; that stretch reads KVSG. Gly58 serves as a coordination point for UMP. Positions 59 and 63 each coordinate ATP. Residues Asp78 and 139 to 146 contribute to the UMP site; that span reads TGNPFCTT. Thr166, Gln167, Tyr172, and Asp175 together coordinate ATP.

It belongs to the UMP kinase family. Homohexamer.

The protein resides in the cytoplasm. The catalysed reaction is UMP + ATP = UDP + ADP. It functions in the pathway pyrimidine metabolism; CTP biosynthesis via de novo pathway; UDP from UMP (UMPK route): step 1/1. Inhibited by UTP. Catalyzes the reversible phosphorylation of UMP to UDP. This is Uridylate kinase from Rickettsia conorii (strain ATCC VR-613 / Malish 7).